The chain runs to 229 residues: Cytidylate kinase (229 aa).

12-20 provides a ligand contact to ATP; sequence GPSGAGKGT.

It belongs to the cytidylate kinase family. Type 1 subfamily.

The protein localises to the cytoplasm. It carries out the reaction CMP + ATP = CDP + ADP. The enzyme catalyses dCMP + ATP = dCDP + ADP. This is Cytidylate kinase from Pseudomonas paraeruginosa (strain DSM 24068 / PA7) (Pseudomonas aeruginosa (strain PA7)).